The chain runs to 299 residues: Probable alpha-L-glutamate ligase 2 (299 aa).

Residues 104–287 (MQLMSRRGIG…VAGAIIEFVE (184 aa)) form the ATP-grasp domain. ATP-binding positions include Lys141, 178 to 179 (EY), Asp187, and 211 to 213 (RSN). 3 residues coordinate Mg(2+): Asp248, Glu260, and Asn262. Positions 248, 260, and 262 each coordinate Mn(2+).

Belongs to the RimK family. Requires Mg(2+) as cofactor. The cofactor is Mn(2+).

This Shewanella sp. (strain MR-4) protein is Probable alpha-L-glutamate ligase 2.